Consider the following 414-residue polypeptide: Esterase FrsA (414 aa).

It belongs to the FrsA family.

It carries out the reaction a carboxylic ester + H2O = an alcohol + a carboxylate + H(+). Catalyzes the hydrolysis of esters. This Escherichia fergusonii (strain ATCC 35469 / DSM 13698 / CCUG 18766 / IAM 14443 / JCM 21226 / LMG 7866 / NBRC 102419 / NCTC 12128 / CDC 0568-73) protein is Esterase FrsA.